The following is a 343-amino-acid chain: Thromboxane A2 receptor (343 aa).

The Extracellular segment spans residues 1 to 29 (MWPNASSLGPCFRPMNITLEERRLIASPW). Residues N4 and N16 are each glycosylated (N-linked (GlcNAc...) asparagine). The helical transmembrane segment at 30-52 (FAASFCLVGLASNLLALSVLMGA) threads the bilayer. Topologically, residues 53–66 (RQGSSQSRSSFLTF) are cytoplasmic. Residues 67 to 87 (LCGLVLTDFMGLLVTGAIVVT) form a helical membrane-spanning segment. The Extracellular segment spans residues 88–106 (QHFVLFEWQAVDPGCSLCH). C105 and C183 are oxidised to a cystine. The helical transmembrane segment at 107–128 (FMGVIMVFFGLCPLLLGAAMAS) threads the bilayer. Over 129-149 (ERFLGITRPFSRPATASQRRA) the chain is Cytoplasmic. A helical transmembrane segment spans residues 150–172 (WTTVGLVWASALALGLLPLLGVG). Topologically, residues 173 to 193 (HYTVQYPGSWCFLTLGTDPGD) are extracellular. Residues 194-219 (VAFGLLFALLGSISVGMSFLLNTISV) traverse the membrane as a helical segment. Residues 220 to 246 (ATLCHVYHGQATAQQRPRDCEVEMMVQ) lie on the Cytoplasmic side of the membrane. A helical membrane pass occupies residues 247–270 (LMGIMVVASICWMPLLVFIAQTVL). The Extracellular segment spans residues 271–289 (QSPPAMSPTGQLSRLTERQ). Residues 290–311 (LLIYLRVATWNQILDPWVYILF) form a helical membrane-spanning segment. The Cytoplasmic segment spans residues 312–343 (RRAVIQRFYPRLSTRSRSLSLQPQLTRRSTIH). A phosphoserine mark is found at S329 and S331.

The protein belongs to the G-protein coupled receptor 1 family. Interacts with RPGRIP1L. Interacts with RACK1; the interaction regulates TBXA2R cell surface expression.

The protein localises to the cell membrane. In terms of biological role, receptor for thromboxane A2 (TXA2), a potent stimulator of platelet aggregation. The activity of this receptor is mediated by a G-protein that activates a phosphatidylinositol-calcium second messenger system. In the kidney, the binding of TXA2 to glomerular TP receptors causes intense vasoconstriction. Activates phospholipase C and adenylyl cyclase. This is Thromboxane A2 receptor (TBXA2R) from Bos taurus (Bovine).